We begin with the raw amino-acid sequence, 454 residues long: Phosphoglucosamine mutase (454 aa).

Residue Ser-104 is the Phosphoserine intermediate of the active site. Mg(2+) contacts are provided by Ser-104, Asp-244, Asp-246, and Asp-248. Phosphoserine is present on Ser-104.

This sequence belongs to the phosphohexose mutase family. Mg(2+) serves as cofactor. Activated by phosphorylation.

It catalyses the reaction alpha-D-glucosamine 1-phosphate = D-glucosamine 6-phosphate. In terms of biological role, catalyzes the conversion of glucosamine-6-phosphate to glucosamine-1-phosphate. The polypeptide is Phosphoglucosamine mutase (Lacticaseibacillus paracasei (strain ATCC 334 / BCRC 17002 / CCUG 31169 / CIP 107868 / KCTC 3260 / NRRL B-441) (Lactobacillus paracasei)).